The following is a 444-amino-acid chain: Phosphoglucosamine mutase (444 aa).

The active-site Phosphoserine intermediate is the S99. The Mg(2+) site is built by S99, D242, D244, and D246. S99 bears the Phosphoserine mark.

The protein belongs to the phosphohexose mutase family. Requires Mg(2+) as cofactor. In terms of processing, activated by phosphorylation.

The enzyme catalyses alpha-D-glucosamine 1-phosphate = D-glucosamine 6-phosphate. In terms of biological role, catalyzes the conversion of glucosamine-6-phosphate to glucosamine-1-phosphate. This chain is Phosphoglucosamine mutase, found in Aliarcobacter butzleri (strain RM4018) (Arcobacter butzleri).